Consider the following 130-residue polypeptide: Large ribosomal subunit protein bL12 (130 aa).

This sequence belongs to the bacterial ribosomal protein bL12 family. In terms of assembly, homodimer. Part of the ribosomal stalk of the 50S ribosomal subunit. Forms a multimeric L10(L12)X complex, where L10 forms an elongated spine to which 2 to 4 L12 dimers bind in a sequential fashion. Binds GTP-bound translation factors.

Functionally, forms part of the ribosomal stalk which helps the ribosome interact with GTP-bound translation factors. Is thus essential for accurate translation. The chain is Large ribosomal subunit protein bL12 from Mycolicibacterium vanbaalenii (strain DSM 7251 / JCM 13017 / BCRC 16820 / KCTC 9966 / NRRL B-24157 / PYR-1) (Mycobacterium vanbaalenii).